A 202-amino-acid chain; its full sequence is Small ribosomal subunit protein uS4 (202 aa).

Residues 91 to 168 (SRLSSILYNS…HKVPDYLEVD (78 aa)) form the S4 RNA-binding domain.

This sequence belongs to the universal ribosomal protein uS4 family. Part of the 30S ribosomal subunit. Contacts protein S5. The interaction surface between S4 and S5 is involved in control of translational fidelity.

Functionally, one of the primary rRNA binding proteins, it binds directly to 16S rRNA where it nucleates assembly of the body of the 30S subunit. Its function is as follows. With S5 and S12 plays an important role in translational accuracy. The chain is Small ribosomal subunit protein uS4 from Ehrlichia canis (strain Jake).